The sequence spans 207 residues: UPF0319 protein VV2327 (207 aa).

Residues 1–18 (MLRVLGLAGMLMSFNIHA) form the signal peptide.

Belongs to the UPF0319 family.

In Vibrio vulnificus (strain YJ016), this protein is UPF0319 protein VV2327.